Here is a 602-residue protein sequence, read N- to C-terminus: MQSKGTIISIQFLLRFLLLWVLIGKSHTEEDIIITTKNGKVRGMNLPVLDGTVTAFLGIPYAQPPLGRLRFKKPQFLTKWSDIWNATKYANSCYQNADQSFPGFPGSEMWNPNTDLSEDCLYLNVWIPTPKPKNATVMIWIYGGGFQTGTSSLPVYDGKFLARVERVIVVSMNYRVGALGFLALPGNPEVPGNMGLFDQQLALQWVQKNIAAFGGNPKSVTLFGESAGAGSVSLHLLSPRSQPLFTRAILQSGSSNAPWAVMSLDEAKNRTLTLAKFIGCSKENDTEIIKCLRNKDPQEILLNELLVVPSDTLLSVNFGPVVDGDFLTDMPDTLLQLGQFKKTQILVGVNKDEGTAFLVYGAPGFSKDNDSIITRKEFQEGLKIYFPGVSEFGREAILFYYVDLLDDQRAEKYREALDDVLGDYNIICPALEFTTKFSELGNNAFFYYFEHRSSQLPWPEWMGVMHGYEIEFVFGLPLERRVNYTRAEEILSRSIMNYWANFAKYGNPNGTQNNSTRWPAFRSTDQKYLTLNAESPKVYTKLRAQQCRFWTLFFPKVLEMTGNIDEAEREWRAGFYRWNNYMMDWKNQFNDYTSKKESCAGL.

Residues 1–28 form the signal peptide; it reads MQSKGTIISIQFLLRFLLLWVLIGKSHT. A glycan (N-linked (GlcNAc...) asparagine) is linked at Asn85. Residues Cys93 and Cys120 are joined by a disulfide bond. N-linked (GlcNAc...) asparagine glycosylation occurs at Asn134. 144–145 lines the substrate pocket; it reads GG. The Acyl-ester intermediate role is filled by Ser226. Phosphoserine is present on Ser226. N-linked (GlcNAc...) asparagine glycans are attached at residues Asn269 and Asn284. Residues Cys280 and Cys291 are joined by a disulfide bond. Residue Glu353 is the Charge relay system of the active site. Residue Asn369 is glycosylated (N-linked (GlcNAc...) asparagine). Cys428 and Cys547 form a disulfide bridge. His466 serves as the catalytic Charge relay system. N-linked (GlcNAc...) asparagine glycosylation is found at Asn483, Asn509, Asn513, and Asn514.

Belongs to the type-B carboxylesterase/lipase family. In terms of assembly, homotetramer; disulfide-linked. Dimer of dimers.

The protein localises to the secreted. The catalysed reaction is an acylcholine + H2O = a carboxylate + choline + H(+). Functionally, esterase with broad substrate specificity. Contributes to the inactivation of the neurotransmitter acetylcholine. Can degrade neurotoxic organophosphate esters. The polypeptide is Cholinesterase (BCHE) (Felis catus (Cat)).